The sequence spans 98 residues: Bombyxin E-1 (98 aa).

Positions 1–19 are cleaved as a signal peptide; it reads MNRPVFLVLLLTGFLCIAA. Gln20 carries the pyrrolidone carboxylic acid modification. 3 disulfide bridges follow: Cys29-Cys85, Cys41-Cys98, and Cys84-Cys89. Residues 50-75 constitute a propeptide, c peptide like; the sequence is SESSLASYSSRGWPWLPTPNFNKRAI.

The protein belongs to the insulin family. Heterodimer of a B chain and an A chain linked by two disulfide bonds.

The protein resides in the secreted. Its function is as follows. PTTH is a brain peptide responsible for activation of prothoracic glands to produce ecdysone in insects. The polypeptide is Bombyxin E-1 (BBXE1) (Bombyx mori (Silk moth)).